The following is a 179-amino-acid chain: 5'-deoxynucleotidase VV1_0013 (179 aa).

Histidine 53 is an a divalent metal cation binding site. Residues 62–65 (DLPT) and aspartate 122 contribute to the substrate site. Aspartate 122 is a binding site for a divalent metal cation.

It belongs to the 5DNU family. Homodimer. A divalent metal cation is required as a cofactor.

Its subcellular location is the cytoplasm. The catalysed reaction is a 2'-deoxyribonucleoside 5'-phosphate + H2O = a 2'-deoxyribonucleoside + phosphate. Functionally, catalyzes the strictly specific dephosphorylation of 2'-deoxyribonucleoside 5'-monophosphates. The polypeptide is 5'-deoxynucleotidase VV1_0013 (Vibrio vulnificus (strain CMCP6)).